Here is a 778-residue protein sequence, read N- to C-terminus: Probable dipeptidyl peptidase 4 (778 aa).

The first 18 residues, 1–18 (MKTSQFLSLLLLAGIAQA), serve as a signal peptide directing secretion. Asparagine 84, asparagine 114, and asparagine 222 each carry an N-linked (GlcNAc...) asparagine glycan. Catalysis depends on charge relay system residues serine 616, aspartate 693, and histidine 728.

It belongs to the peptidase S9B family.

The protein resides in the secreted. The catalysed reaction is Release of an N-terminal dipeptide, Xaa-Yaa-|-Zaa-, from a polypeptide, preferentially when Yaa is Pro, provided Zaa is neither Pro nor hydroxyproline.. Extracellular dipeptidyl-peptidase which removes N-terminal dipeptides sequentially from polypeptides having unsubstituted N-termini provided that the penultimate residue is proline. Contributes to pathogenicity. The protein is Probable dipeptidyl peptidase 4 (DPP4) of Arthroderma benhamiae (strain ATCC MYA-4681 / CBS 112371) (Trichophyton mentagrophytes).